A 602-amino-acid chain; its full sequence is Elongation factor 4 (602 aa).

The tr-type G domain occupies 7–189; sequence SKIRNFCIIA…AVVSRIPHPQ (183 aa). Residues 19-24 and 136-139 contribute to the GTP site; these read DHGKST and NKVD.

The protein belongs to the TRAFAC class translation factor GTPase superfamily. Classic translation factor GTPase family. LepA subfamily.

The protein localises to the cell inner membrane. The enzyme catalyses GTP + H2O = GDP + phosphate + H(+). Required for accurate and efficient protein synthesis under certain stress conditions. May act as a fidelity factor of the translation reaction, by catalyzing a one-codon backward translocation of tRNAs on improperly translocated ribosomes. Back-translocation proceeds from a post-translocation (POST) complex to a pre-translocation (PRE) complex, thus giving elongation factor G a second chance to translocate the tRNAs correctly. Binds to ribosomes in a GTP-dependent manner. The sequence is that of Elongation factor 4 from Prochlorococcus marinus subsp. pastoris (strain CCMP1986 / NIES-2087 / MED4).